Reading from the N-terminus, the 352-residue chain is PDZ and LIM domain protein 2 (352 aa).

The PDZ domain maps to 1-84 (MALTVDVAGP…PLRLQLDRSQ (84 aa)). 2 disordered regions span residues 69-95 (IRQS…NGDS) and 108-141 (VRTH…PPPF). Over residues 81-95 (DRSQAASPGQTNGDS) the composition is skewed to polar residues. The segment covering 117-135 (SLRSSYSSPTSLSPRAGSP) has biased composition (low complexity). S124 carries the post-translational modification Phosphoserine. Position 126 is a phosphothreonine (T126). Phosphoserine occurs at positions 127, 129, 134, 137, 143, 161, 197, 203, 213, and 266. Disordered stretches follow at residues 170-214 (LSYS…GGSL) and 253-275 (ERGG…PASR). The segment covering 258-275 (PAFLPSSLSPQSSLPASR) has biased composition (low complexity). The region spanning 284–344 (HTCEKCSTSI…EKHARQRYSA (61 aa)) is the LIM zinc-binding domain.

As to quaternary structure, interacts with alpha-actinins ACTN1 and ACTN4, FLNA and MYH9. Interacts (via LIM zinc-binding domain) with MKRN2.

Its subcellular location is the cytoplasm. The protein localises to the cytoskeleton. In terms of biological role, probable adapter protein located at the actin cytoskeleton that promotes cell attachment. Necessary for the migratory capacity of epithelial cells. Overexpression enhances cell adhesion to collagen and fibronectin and suppresses anchorage independent growth. May contribute to tumor cell migratory capacity. The polypeptide is PDZ and LIM domain protein 2 (PDLIM2) (Macaca fascicularis (Crab-eating macaque)).